A 168-amino-acid chain; its full sequence is MPRSRINGNFIDKTFSIVANILLRIIPTTSGEKEAFTYYRDGMSAQSEGNYAEALQNYYEATRPEIDPYDRSYILYNIGLIHTSNGEHTKALEYYFRALERNPFLPQAFNNMAVICHYRGEQAILQGDSEIAEAWSDQAAEYWKQAIALTPGNYIEAHNWLKITRRFE.

TPR repeat units follow at residues 35–68, 72–105, and 120–153; these read AFTY…EIDP, SYIL…NPFL, and GEQA…TPGN.

The protein belongs to the Ycf3 family.

It is found in the plastid. Its subcellular location is the chloroplast thylakoid membrane. In terms of biological role, essential for the assembly of the photosystem I (PSI) complex. May act as a chaperone-like factor to guide the assembly of the PSI subunits. The chain is Photosystem I assembly protein Ycf3 from Lemna minor (Common duckweed).